The sequence spans 291 residues: Small ribosomal subunit protein uS2 (291 aa).

This sequence belongs to the universal ribosomal protein uS2 family.

The polypeptide is Small ribosomal subunit protein uS2 (Lawsonia intracellularis (strain PHE/MN1-00)).